The primary structure comprises 167 residues: Gametocyte-specific factor 1 (167 aa).

The residue at position 8 (Ser8) is a Phosphoserine. 2 CHHC U11-48K-type zinc fingers span residues 14–41 (LLQC…RKNH) and 48–75 (LATC…DDRS). Zn(2+)-binding residues include Cys17, His23, His33, Cys37, Cys51, His57, His67, and Cys71.

It belongs to the UPF0224 (FAM112) family.

The protein localises to the cytoplasm. Functionally, required for spermatogenesis and is involved in the suppression of retrotransposon transcription in male germ cells. The polypeptide is Gametocyte-specific factor 1 (GTSF1) (Homo sapiens (Human)).